Consider the following 795-residue polypeptide: Phenylalanine--tRNA ligase beta subunit (795 aa).

The region spanning 39 to 148 (AGSFHGVVVG…ADAPIGTDIR (110 aa)) is the tRNA-binding domain. The B5 domain maps to 401-476 (PKRATITLRR…RVYGYNNIPD (76 aa)). Mg(2+) is bound by residues Asp454, Asp460, Glu463, and Glu464. The FDX-ACB domain maps to 701–794 (SRFPANRRDI…LKERFQASLR (94 aa)).

Belongs to the phenylalanyl-tRNA synthetase beta subunit family. Type 1 subfamily. As to quaternary structure, tetramer of two alpha and two beta subunits. Mg(2+) is required as a cofactor.

It is found in the cytoplasm. It carries out the reaction tRNA(Phe) + L-phenylalanine + ATP = L-phenylalanyl-tRNA(Phe) + AMP + diphosphate + H(+). This chain is Phenylalanine--tRNA ligase beta subunit, found in Escherichia coli O157:H7.